We begin with the raw amino-acid sequence, 367 residues long: Pre-small/secreted glycoprotein (367 aa).

The signal sequence occupies residues 1 to 33; the sequence is MGSGYQLLQLPRERFRKTSFLVWVIILFQRAIS. N-linked (GlcNAc...) asparagine; by host glycosylation occurs at N41. 2 disulfide bridges follow: C109–C136 and C122–C148. Residues N205, N239, N258, and N269 are each glycosylated (N-linked (GlcNAc...) asparagine; by host).

It belongs to the filoviruses glycoprotein family. Homodimer; disulfide-linked. The homodimers are linked by two disulfide bonds in a parallel orientation. In terms of assembly, monomer. This precursor is processed into mature sGP and delta-peptide by host furin or furin-like proteases. The cleavage site corresponds to the furin optimal cleavage sequence [KR]-X-[KR]-R. Post-translationally, N-glycosylated. In terms of processing, O-glycosylated.

It is found in the secreted. Seems to possess an anti-inflammatory activity as it can reverse the barrier-decreasing effects of TNF alpha. Might therefore contribute to the lack of inflammatory reaction seen during infection in spite the of extensive necrosis and massive virus production. Does not seem to be involved in activation of primary macrophages. Does not seem to interact specifically with neutrophils. In terms of biological role, viroporin that permeabilizes mammalian cell plasma membranes. It acts by altering permeation of ionic compounds and small molecules. This activity may lead to viral enterotoxic activity. This Reston ebolavirus (strain Philippines-96) (REBOV) protein is Pre-small/secreted glycoprotein (GP).